A 177-amino-acid polypeptide reads, in one-letter code: Co-chaperone protein HscB homolog (177 aa).

The J domain occupies 8–80; that stretch reads DFFALFGLPR…LPRAQYMLEL (73 aa).

The protein belongs to the HscB family. Interacts with HscA and stimulates its ATPase activity.

Co-chaperone involved in the maturation of iron-sulfur cluster-containing proteins. Seems to help targeting proteins to be folded toward HscA. This is Co-chaperone protein HscB homolog from Aromatoleum aromaticum (strain DSM 19018 / LMG 30748 / EbN1) (Azoarcus sp. (strain EbN1)).